The sequence spans 215 residues: MNKYNIYVDHTLLKADASLEEIHKLCEEAEENEFYSVCINPCFVKVAKHYLLETSVKICTVIGFPLGANTIETKVFETKNAIDLGADEIDMVININQLINGNREYCLNEINQIKEVCGDKILKVIVETAFLNREQKEFAAKIILESNADFIKTSTGFAKEGAKLEDIILWKRILGDVKQIKASGGIKNFEDFKSFIEAGATRIGTSSAIKILNNH.

Residue D90 is the Proton donor/acceptor of the active site. K152 functions as the Schiff-base intermediate with acetaldehyde in the catalytic mechanism. Residue K181 is the Proton donor/acceptor of the active site.

Belongs to the DeoC/FbaB aldolase family. DeoC type 1 subfamily.

It localises to the cytoplasm. The enzyme catalyses 2-deoxy-D-ribose 5-phosphate = D-glyceraldehyde 3-phosphate + acetaldehyde. It functions in the pathway carbohydrate degradation; 2-deoxy-D-ribose 1-phosphate degradation; D-glyceraldehyde 3-phosphate and acetaldehyde from 2-deoxy-alpha-D-ribose 1-phosphate: step 2/2. Functionally, catalyzes a reversible aldol reaction between acetaldehyde and D-glyceraldehyde 3-phosphate to generate 2-deoxy-D-ribose 5-phosphate. This chain is Deoxyribose-phosphate aldolase, found in Ureaplasma parvum serovar 3 (strain ATCC 27815 / 27 / NCTC 11736).